The chain runs to 385 residues: Succinyl-diaminopimelate desuccinylase (385 aa).

Position 78 (histidine 78) interacts with Zn(2+). Aspartate 80 is a catalytic residue. Aspartate 110 contacts Zn(2+). Glutamate 144 acts as the Proton acceptor in catalysis. 3 residues coordinate Zn(2+): glutamate 145, glutamate 173, and histidine 358.

This sequence belongs to the peptidase M20A family. DapE subfamily. In terms of assembly, homodimer. Zn(2+) is required as a cofactor. Co(2+) serves as cofactor.

It catalyses the reaction N-succinyl-(2S,6S)-2,6-diaminopimelate + H2O = (2S,6S)-2,6-diaminopimelate + succinate. It participates in amino-acid biosynthesis; L-lysine biosynthesis via DAP pathway; LL-2,6-diaminopimelate from (S)-tetrahydrodipicolinate (succinylase route): step 3/3. Functionally, catalyzes the hydrolysis of N-succinyl-L,L-diaminopimelic acid (SDAP), forming succinate and LL-2,6-diaminopimelate (DAP), an intermediate involved in the bacterial biosynthesis of lysine and meso-diaminopimelic acid, an essential component of bacterial cell walls. This chain is Succinyl-diaminopimelate desuccinylase, found in Gluconacetobacter diazotrophicus (strain ATCC 49037 / DSM 5601 / CCUG 37298 / CIP 103539 / LMG 7603 / PAl5).